The following is a 398-amino-acid chain: Heat-inducible transcription repressor HrcA (398 aa).

Belongs to the HrcA family.

Its function is as follows. Negative regulator of class I heat shock genes (grpE-dnaK-dnaJ and groELS operons). Prevents heat-shock induction of these operons. This Chlamydia pneumoniae (Chlamydophila pneumoniae) protein is Heat-inducible transcription repressor HrcA.